The chain runs to 312 residues: GTP cyclohydrolase MptA (312 aa).

The protein belongs to the GTP cyclohydrolase IV family. As to quaternary structure, homodimer. Fe(2+) serves as cofactor.

It carries out the reaction GTP + H2O = 7,8-dihydroneopterin 2',3'-cyclic phosphate + formate + diphosphate + H(+). It participates in cofactor biosynthesis; 5,6,7,8-tetrahydromethanopterin biosynthesis. In terms of biological role, converts GTP to 7,8-dihydro-D-neopterin 2',3'-cyclic phosphate, the first intermediate in the biosynthesis of coenzyme methanopterin. The chain is GTP cyclohydrolase MptA from Methanococcus vannielii (strain ATCC 35089 / DSM 1224 / JCM 13029 / OCM 148 / SB).